Reading from the N-terminus, the 906-residue chain is MEEQQPPSIKKKIVDFLTNFLKKRPSHEDLRRDNILVAPNNVSPAIQPSRYELEGHLNPSSHNRDDSSNNNNNNNNNNNTVEYSRGHSKSHSRSDSKHHNRENSKSDRDNSRSDNIRFGRKDTFKNAWDYLRNIDFTFSKTKYGNTVVHRLKHPQFGLSPEELQSLYPDQPHGIPIVLTKCFEYLSKHLETEGLFRVPGSNREVSLLKFKIEDGDLDFSEVLIPYNICGLISTFFKELPEPLIPFDYYNDAILITKLGSKDKYIIGLRDLVLSLPPANLCMLRKLLEFLLTVEKKNEFNKMTISNISIIFGVTLLKDPDTVDPMKSLNNIQAQSTIIKYMLEYFNDIFKEASVVKAYRKSIVPKEPMDTTSISYLDPAESNGGSPRTSNTPYQQQHQLSSQSMANIKPRPPSRSKMMRETIVLSPRVSGGNNQVYANATMTRPMSRLFFDPEIIPSPPPTTTTTTTTTTNTTTTTTTTNTTPNNTTTVNIQQKPVPPKPNLIPRKLPPNPNYSTYPAPLPPRQPNTIPLAPIPPPKPNSTYKKQITQPPPPRKPTSPSPPIATLKPTSKSDFIPSTNNNLNNNNTTTTTSSLISIPKAKPPPPKRNNVVSPAIEEPINPNLNINSTTTTPTPPLASFKNNGTISSGSKSNPNLQNLLNTNQPLVSSNGPPNKPPPQPFELLKSKPITTTPTIKKGVTFSETPKISNSPPSPSSSSPSPPHNQPIIVNKPIPSKSAPPPVRTTSSPSIVTKKFVPTIPTQTTTASSSSTPTTPKNQHLSKDDSSIPPINTSQTNNNISNSSIPSPKSKSALSLSTPKDSITGKPIKPPSNSDLSISTTPLPPTSSSPTSSSPLQSPKISSPSVLTVSQKIALNEKIAANQAKKNPLSNSGGLKQISPDLIKSNNINK.

The tract at residues 53-117 (LEGHLNPSSH…RDNSRSDNIR (65 aa)) is disordered. Over residues 69 to 79 (NNNNNNNNNNN) the composition is skewed to low complexity. Positions 92-117 (SRSDSKHHNRENSKSDRDNSRSDNIR) are enriched in basic and acidic residues. Residues 161–348 (EELQSLYPDQ…YMLEYFNDIF (188 aa)) enclose the Rho-GAP domain. Disordered regions lie at residues 368–415 (DTTS…SRSK), 452–864 (EIIP…SVLT), and 877–906 (ANQAKKNPLSNSGGLKQISPDLIKSNNINK). The segment covering 381-404 (NGGSPRTSNTPYQQQHQLSSQSMA) has biased composition (polar residues). The span at 461–487 (TTTTTTTTTNTTTTTTTTNTTPNNTTT) shows a compositional bias: low complexity. Pro residues-rich tracts occupy residues 494–510 (PVPPKPNLIPRKLPPNP) and 547–560 (QPPPPRKPTSPSPP). A compositionally biased stretch (polar residues) spans 565 to 574 (KPTSKSDFIP). Composition is skewed to low complexity over residues 575–597 (STNNNLNNNNTTTTTSSLISIPK) and 613–629 (IEEPINPNLNINSTTTT). Positions 637-649 (FKNNGTISSGSKS) are enriched in polar residues. 2 stretches are compositionally biased toward low complexity: residues 650-663 (NPNLQNLLNTNQPL) and 683-694 (SKPITTTPTIKK). Positions 708 to 721 (PPSPSSSSPSPPHN) are enriched in pro residues. Low complexity-rich tracts occupy residues 754-772 (PTIPTQTTTASSSSTPTTP), 785-816 (PPINTSQTNNNISNSSIPSPKSKSALSLSTPK), and 844-861 (SSPTSSSPLQSPKISSPS). Polar residues predominate over residues 880-890 (AKKNPLSNSGG).

Its subcellular location is the cytoplasm. Functionally, rho GTPase-activating protein involved in the signal transduction pathway. The protein is Rho GTPase-activating protein gacJ (gacJ) of Dictyostelium discoideum (Social amoeba).